The following is a 275-amino-acid chain: Dihydroxyacetone phosphatase (275 aa).

The active-site Nucleophile is Asp10. Mg(2+) contacts are provided by Asp10, Asp12, and Asp206. Catalysis depends on Asp12, which acts as the Proton donor/acceptor.

It belongs to the HAD-like hydrolase superfamily. As to quaternary structure, homohexamer. Requires Mg(2+) as cofactor.

It catalyses the reaction dihydroxyacetone phosphate + H2O = dihydroxyacetone + phosphate. Functionally, catalyzes dephosphorylation of dihydroxyacetone phosphate (DHAP) to produce 1,3-dihydroxyacetone (DHA). Is the main enzyme responsible for DHA production from catabolism of sugars (glucose, fructose, and sucrose) in C.glutamicum. Displays no activity toward nucleoside monophosphates (AMP, CMP, GMP, or UMP). This is Dihydroxyacetone phosphatase from Corynebacterium glutamicum (strain R).